A 66-amino-acid chain; its full sequence is Large ribosomal subunit protein bL33c (66 aa).

Belongs to the bacterial ribosomal protein bL33 family.

The protein localises to the plastid. Its subcellular location is the chloroplast. In Aethionema cordifolium (Lebanon stonecress), this protein is Large ribosomal subunit protein bL33c.